The chain runs to 91 residues: Small ribosomal subunit protein bS16 (91 aa).

It belongs to the bacterial ribosomal protein bS16 family.

This Ligilactobacillus salivarius (strain UCC118) (Lactobacillus salivarius) protein is Small ribosomal subunit protein bS16.